We begin with the raw amino-acid sequence, 422 residues long: 3-phosphoshikimate 1-carboxyvinyltransferase (422 aa).

Residues Lys20, Ser21, and Arg25 each coordinate 3-phosphoshikimate. Lys20 lines the phosphoenolpyruvate pocket. The phosphoenolpyruvate site is built by Gly92 and Arg120. 3-phosphoshikimate contacts are provided by Ser163, Ser164, Gln165, Ser191, Asp304, and Lys331. Gln165 provides a ligand contact to phosphoenolpyruvate. The active-site Proton acceptor is Asp304. Phosphoenolpyruvate is bound by residues Arg335 and Arg377.

It belongs to the EPSP synthase family. In terms of assembly, monomer.

The protein resides in the cytoplasm. It carries out the reaction 3-phosphoshikimate + phosphoenolpyruvate = 5-O-(1-carboxyvinyl)-3-phosphoshikimate + phosphate. The protein operates within metabolic intermediate biosynthesis; chorismate biosynthesis. Its function is as follows. Catalyzes the transfer of the enolpyruvyl moiety of phosphoenolpyruvate (PEP) to the 5-hydroxyl of shikimate-3-phosphate (S3P) to produce enolpyruvyl shikimate-3-phosphate and inorganic phosphate. In Methanocorpusculum labreanum (strain ATCC 43576 / DSM 4855 / Z), this protein is 3-phosphoshikimate 1-carboxyvinyltransferase.